Reading from the N-terminus, the 399-residue chain is CCA-adding enzyme (399 aa).

Positions 32 and 35 each coordinate ATP. Residues G32 and R35 each contribute to the CTP site. Mg(2+)-binding residues include D45 and D47. Positions 116, 159, 162, 165, and 168 each coordinate ATP. CTP is bound by residues R116, D159, R162, R165, and R168.

The protein belongs to the tRNA nucleotidyltransferase/poly(A) polymerase family. Bacterial CCA-adding enzyme type 3 subfamily. Homodimer. Mg(2+) serves as cofactor.

It carries out the reaction a tRNA precursor + 2 CTP + ATP = a tRNA with a 3' CCA end + 3 diphosphate. The catalysed reaction is a tRNA with a 3' CCA end + 2 CTP + ATP = a tRNA with a 3' CCACCA end + 3 diphosphate. Its function is as follows. Catalyzes the addition and repair of the essential 3'-terminal CCA sequence in tRNAs without using a nucleic acid template. Adds these three nucleotides in the order of C, C, and A to the tRNA nucleotide-73, using CTP and ATP as substrates and producing inorganic pyrophosphate. tRNA 3'-terminal CCA addition is required both for tRNA processing and repair. Also involved in tRNA surveillance by mediating tandem CCA addition to generate a CCACCA at the 3' terminus of unstable tRNAs. While stable tRNAs receive only 3'-terminal CCA, unstable tRNAs are marked with CCACCA and rapidly degraded. The chain is CCA-adding enzyme from Streptococcus pneumoniae (strain CGSP14).